The following is a 473-amino-acid chain: Argininosuccinate lyase (473 aa).

The protein belongs to the lyase 1 family. Argininosuccinate lyase subfamily.

The protein resides in the cytoplasm. It carries out the reaction 2-(N(omega)-L-arginino)succinate = fumarate + L-arginine. It participates in amino-acid biosynthesis; L-arginine biosynthesis; L-arginine from L-ornithine and carbamoyl phosphate: step 3/3. The sequence is that of Argininosuccinate lyase from Nocardia farcinica (strain IFM 10152).